A 396-amino-acid polypeptide reads, in one-letter code: Methylthioribose kinase (396 aa).

Residues Asn-44, Lys-61, and 115-117 (EDL) each bind ATP. Substrate is bound at residue Asp-233. ATP is bound at residue 250–252 (DPE). Arg-340 contributes to the substrate binding site.

It belongs to the methylthioribose kinase family. In terms of assembly, homodimer.

It catalyses the reaction 5-(methylsulfanyl)-D-ribose + ATP = 5-(methylsulfanyl)-alpha-D-ribose 1-phosphate + ADP + H(+). The protein operates within amino-acid biosynthesis; L-methionine biosynthesis via salvage pathway; S-methyl-5-thio-alpha-D-ribose 1-phosphate from S-methyl-5'-thioadenosine (hydrolase route): step 2/2. Functionally, catalyzes the phosphorylation of methylthioribose into methylthioribose-1-phosphate. The protein is Methylthioribose kinase of Geobacillus thermodenitrificans (strain NG80-2).